Reading from the N-terminus, the 199-residue chain is MDINMTRIYLASRSPRRAELLHQIGVAFVIIPSDIDESVYNAELAEDYVLRLARGKAQSCCARLPALDMPVLAADTTVCVDGKILGKPESDTEACAMLASMSGRWHEVHTAIAVASRDGTEVALSTTRVKMAALSRDVIAAYVSTGEPRDKAGAYGIQGLGGTLIERIEGSYSGVMGLPLFETAKLLRNCGVAIPGTQD.

Asp75 (proton acceptor) is an active-site residue.

The protein belongs to the Maf family. YhdE subfamily. It depends on a divalent metal cation as a cofactor.

It is found in the cytoplasm. The enzyme catalyses dTTP + H2O = dTMP + diphosphate + H(+). The catalysed reaction is UTP + H2O = UMP + diphosphate + H(+). Its function is as follows. Nucleoside triphosphate pyrophosphatase that hydrolyzes dTTP and UTP. May have a dual role in cell division arrest and in preventing the incorporation of modified nucleotides into cellular nucleic acids. The protein is dTTP/UTP pyrophosphatase of Methylobacillus flagellatus (strain ATCC 51484 / DSM 6875 / VKM B-1610 / KT).